The following is a 907-amino-acid chain: Glutamate receptor 1 (907 aa).

The N-terminal stretch at Met-1–Gly-18 is a signal peptide. Residues Ala-19–Ala-536 lie on the Extracellular side of the membrane. 6 N-linked (GlcNAc...) asparagine glycosylation sites follow: Asn-63, Asn-249, Asn-257, Asn-363, Asn-401, and Asn-406. A disulfide bond links Cys-75 and Cys-323. Residues Pro-492, Thr-494, and Arg-499 each contribute to the L-glutamate site. A helical membrane pass occupies residues Tyr-537–Val-557. The Cytoplasmic segment spans residues Ser-558–Glu-584. The helical; Pore-forming intramembrane region spans Phe-585–Gln-600. Residues Gln-601 to Cys-603 lie within the membrane without spanning it. A lipid anchor (S-palmitoyl cysteine) is attached at Cys-603. Topologically, residues Asp-604–Ser-609 are cytoplasmic. A helical transmembrane segment spans residues Leu-610 to Tyr-630. The Extracellular portion of the chain corresponds to Thr-631 to Asn-805. At Ser-645 the chain carries Phosphoserine. L-glutamate is bound by residues Ser-668 and Thr-669. Ser-710 is modified (phosphoserine). Residue Glu-719 coordinates L-glutamate. Cys-732 and Cys-787 form a disulfide bridge. The helical transmembrane segment at Val-806 to Ile-826 threads the bilayer. Topologically, residues Glu-827–Leu-907 are cytoplasmic. Cys-829 carries S-palmitoyl cysteine lipidation. Phosphoserine is present on residues Ser-849 and Ser-863. The disordered stretch occupies residues Ser-857–Ser-881. Over residues Gly-866–Glu-875 the composition is skewed to gly residues. The PDZ-binding signature appears at Ala-904–Leu-907.

It belongs to the glutamate-gated ion channel (TC 1.A.10.1) family. GRIA1 subfamily. Homotetramer or heterotetramer of pore-forming glutamate receptor subunits. Heteromeric assembly can be the result of both receptor subtype and flip or flop form and according the composition, one partner can be dominant with respect to the fast desensitizing current component, whereas the other can determine the steady-state component. Tetramers may be formed by the dimerization of dimers. Found in a complex with GRIA2, GRIA3, GRIA4, CNIH2, CNIH3, CACNG2, CACNG3, CACNG4, CACNG5, CACNG7 and CACNG8. Interacts with HIP1 and RASGRF2. Interacts with SYNDIG1 and GRIA2. Interacts with DLG1 (via C-terminus). Interacts with LRFN1. Interacts with PRKG2. Interacts with CNIH2 and CACNG2. Interacts with CACNG5; this interaction modulates the gating. Interacts (via C-terminus) with PDLIM4 (via LIM domain); this interaction as well as the interaction of PDLIM4 with alpha-actinin is required for their colocalization in early endosomes. Interacts with SNX27 (via PDZ domain); the interaction is required for recycling to the plasma membrane when endocytosed and prevent degradation in lysosomes. Interacts (via PDZ-binding motif) with SHANK3 (via PDZ domain). Interacts with CACNG3; associates GRIA1 with the adapter protein complex 4 (AP-4) to target GRIA1 to the somatodendritic compartment of neurons. Interacts with CACNG2; this interaction mediates traffick to the plasma membrane and modulation of desensitization. Interacts with CNIH2 and CNIH3; this interaction promotes expression at the plasma membrane and extensively modulates their gating properties by slowing deactivation and desensitization kinetics. Found in a complex with GRIA2, GRIA3, GRIA4, DLG4, CACNG8 and CNIH2. Phosphorylated at Ser-645. Phosphorylated at Ser-710 by PKC. Phosphorylated at Ser-849 by PKC, PKA and CAMK2. Phosphorylated at Ser-863 by PKC, PKA and PRKG2. Phosphorylation of Ser-863 is reduced by induction of long-term depression and increased by induction of long-term potentiation. In terms of processing, palmitoylated. Depalmitoylated by CPT1C and upon L-glutamate stimulation. ZDHHC3/GODZ specifically palmitoylates Cys-603, which leads to Golgi retention and decreased cell surface expression. In contrast, Cys-829 palmitoylation does not affect cell surface expression but regulates stimulation-dependent endocytosis. As to expression, expressed in the outer plexiform layer of the retina of the eye (at protein level). Expressed in the forebrain and hippocampus (at protein level).

It localises to the cell membrane. The protein resides in the endoplasmic reticulum membrane. The protein localises to the postsynaptic cell membrane. Its subcellular location is the postsynaptic density membrane. It is found in the cell projection. It localises to the dendrite. The protein resides in the dendritic spine. The protein localises to the early endosome membrane. Its subcellular location is the recycling endosome membrane. It is found in the presynapse. It localises to the synapse. The enzyme catalyses Ca(2+)(in) = Ca(2+)(out). The catalysed reaction is Na(+)(in) = Na(+)(out). It catalyses the reaction Mg(2+)(in) = Mg(2+)(out). It carries out the reaction Li(+)(in) = Li(+)(out). The enzyme catalyses K(+)(in) = K(+)(out). The catalysed reaction is Sr(2+)(in) = Sr(2+)(out). Functionally, ionotropic glutamate receptor that functions as a ligand-gated cation channel, gated by L-glutamate and glutamatergic agonists such as alpha-amino-3-hydroxy-5-methyl-4-isoxazolepropionic acid (AMPA), quisqualic acid, and kainic acid. L-glutamate acts as an excitatory neurotransmitter at many synapses in the central nervous system. Binding of the excitatory neurotransmitter L-glutamate induces a conformation change, leading to the opening of the cation channel, and thereby converts the chemical signal to an electrical impulse upon entry of monovalent and divalent cations such as sodium and calcium. The receptor then desensitizes rapidly and enters in a transient inactive state, characterized by the presence of bound agonist. In the presence of CACNG2 or CACNG4 or CACNG7 or CACNG8, shows resensitization which is characterized by a delayed accumulation of current flux upon continued application of L-glutamate. Calcium (Ca(2+)) permeability depends on subunits composition and, heteromeric channels containing edited GRIA2 subunit are calcium-impermeable. Also permeable to other divalents cations such as strontium(2+) and magnesium(2+) and monovalent cations such as potassium(1+) and lithium(1+). This chain is Glutamate receptor 1, found in Mus musculus (Mouse).